A 161-amino-acid polypeptide reads, in one-letter code: Endoribonuclease YbeY (161 aa).

The Zn(2+) site is built by H121, H125, and H131.

This sequence belongs to the endoribonuclease YbeY family. It depends on Zn(2+) as a cofactor.

Its subcellular location is the cytoplasm. Single strand-specific metallo-endoribonuclease involved in late-stage 70S ribosome quality control and in maturation of the 3' terminus of the 16S rRNA. The sequence is that of Endoribonuclease YbeY from Xylella fastidiosa (strain M23).